The following is a 589-amino-acid chain: Zinc finger protein 703 (589 aa).

The disordered stretch occupies residues 102–315 (SQIGKPDPPP…GTGHIAPVSP (214 aa)). Residues 113 to 122 (SKLGSLSSSS) are compositionally biased toward low complexity. The segment covering 137-148 (SGEHQNLDDKSS) has biased composition (basic and acidic residues). Residues 179 to 188 (NGSSSSVTCT) show a composition bias toward polar residues. Over residues 196–206 (SPRASSPQQTS) the composition is skewed to low complexity. A compositionally biased stretch (polar residues) spans 214–230 (QSQSPLSQKTAHLQTTH). The segment covering 237–250 (GSDPGNDSSSSGSD) has biased composition (low complexity). Over residues 251-262 (RNGKKDSDHNKS) the composition is skewed to basic and acidic residues. A compositionally biased stretch (low complexity) spans 272-299 (SSHARASVNSSSASSSSSPQPDSKTDSQ). Residues 408 to 460 (VHDPSSALKSGFPLMYPTHHLHSLHPSSLSSSATSSLSHPLYTYGFMLPNETL) form a required for interaction with Groucho and hdac2 plays an important role in repression of transcription region. A C2H2-type zinc finger spans residues 462–490 (HACNWVSVGGPCDKRFATSEELLAHLRTH). Residues 498–589 (GKLLSGYPSS…LGSASALGYQ (92 aa)) are required for self-association and nuclear localization.

Belongs to the Elbow/Noc family. In terms of assembly, self-associates. Interacts with nlz2. May interact with Groucho corepressor proteins.

Its subcellular location is the nucleus. The protein resides in the cytoplasm. In terms of biological role, transcriptional corepressor which does not bind directly to DNA and may regulate transcription through recruitment of histone deacetylases to gene promoters. Required for segmental gene expression during hindbrain development. May regulate cell adhesion, migration and proliferation. The protein is Zinc finger protein 703 (znf703) of Danio rerio (Zebrafish).